A 522-amino-acid chain; its full sequence is Coiled-coil domain-containing protein 149-B (522 aa).

Coiled-coil stretches lie at residues 1 to 196 (MANQ…LESK) and 260 to 287 (IRHQRQTNKILGNRVAELERKLKTLEVS). Positions 413 to 522 (ACTAERSEQH…TSPHQECPSS (110 aa)) are disordered. Composition is skewed to polar residues over residues 429-438 (GGHQSMSTEA), 467-490 (QPVTSETSGSFDCISGSESCTAEQ), and 503-522 (ASLNTSPPEQTSPHQECPSS).

The protein belongs to the CCDC149 family.

In Danio rerio (Zebrafish), this protein is Coiled-coil domain-containing protein 149-B (ccdc149b).